Here is a 378-residue protein sequence, read N- to C-terminus: Carbamoyl phosphate synthase small chain (378 aa).

The interval 1 to 189 is CPSase; it reads MTKPAILALA…DSHPEIAASE (189 aa). Residues serine 47, glycine 241, and glycine 243 each contribute to the L-glutamine site. A Glutamine amidotransferase type-1 domain is found at 193–378; that stretch reads HVVAYDYGVK…RFIDAMAKRR (186 aa). Cysteine 269 acts as the Nucleophile in catalysis. The L-glutamine site is built by leucine 270, glutamine 273, asparagine 311, glycine 313, and phenylalanine 314. Catalysis depends on residues histidine 353 and glutamate 355.

It belongs to the CarA family. In terms of assembly, composed of two chains; the small (or glutamine) chain promotes the hydrolysis of glutamine to ammonia, which is used by the large (or ammonia) chain to synthesize carbamoyl phosphate. Tetramer of heterodimers (alpha,beta)4.

It catalyses the reaction hydrogencarbonate + L-glutamine + 2 ATP + H2O = carbamoyl phosphate + L-glutamate + 2 ADP + phosphate + 2 H(+). It carries out the reaction L-glutamine + H2O = L-glutamate + NH4(+). It functions in the pathway amino-acid biosynthesis; L-arginine biosynthesis; carbamoyl phosphate from bicarbonate: step 1/1. Its pathway is pyrimidine metabolism; UMP biosynthesis via de novo pathway; (S)-dihydroorotate from bicarbonate: step 1/3. In terms of biological role, small subunit of the glutamine-dependent carbamoyl phosphate synthetase (CPSase). CPSase catalyzes the formation of carbamoyl phosphate from the ammonia moiety of glutamine, carbonate, and phosphate donated by ATP, constituting the first step of 2 biosynthetic pathways, one leading to arginine and/or urea and the other to pyrimidine nucleotides. The small subunit (glutamine amidotransferase) binds and cleaves glutamine to supply the large subunit with the substrate ammonia. The chain is Carbamoyl phosphate synthase small chain from Pseudomonas syringae pv. tomato (strain ATCC BAA-871 / DC3000).